Here is a 285-residue protein sequence, read N- to C-terminus: Protoheme IX farnesyltransferase (285 aa).

Helical transmembrane passes span 16–36 (AKPK…ILAF), 40–60 (WYNL…SMII), 106–126 (LLAN…YVFV), 136–156 (WLNI…GYAA), 165–185 (SLLL…ALAL), 217–237 (ILMI…YVII), and 265–285 (YKFS…SFIL).

The protein belongs to the UbiA prenyltransferase family. Protoheme IX farnesyltransferase subfamily.

It localises to the cell membrane. It catalyses the reaction heme b + (2E,6E)-farnesyl diphosphate + H2O = Fe(II)-heme o + diphosphate. It functions in the pathway porphyrin-containing compound metabolism; heme O biosynthesis; heme O from protoheme: step 1/1. Its function is as follows. Converts heme B (protoheme IX) to heme O by substitution of the vinyl group on carbon 2 of heme B porphyrin ring with a hydroxyethyl farnesyl side group. The protein is Protoheme IX farnesyltransferase of Sulfolobus acidocaldarius (strain ATCC 33909 / DSM 639 / JCM 8929 / NBRC 15157 / NCIMB 11770).